Here is a 312-residue protein sequence, read N- to C-terminus: Ornithine carbamoyltransferase (312 aa).

Carbamoyl phosphate-binding positions include 50–53, Q77, R101, and 128–131; these read STRT and HPCQ. Residues N159, D223, and 227 to 228 each bind L-ornithine; that span reads SM. Residues 263–264 and R291 each bind carbamoyl phosphate; that span reads CL.

This sequence belongs to the aspartate/ornithine carbamoyltransferase superfamily. OTCase family.

It localises to the cytoplasm. It catalyses the reaction carbamoyl phosphate + L-ornithine = L-citrulline + phosphate + H(+). Its pathway is amino-acid biosynthesis; L-arginine biosynthesis; L-arginine from L-ornithine and carbamoyl phosphate: step 1/3. Its function is as follows. Reversibly catalyzes the transfer of the carbamoyl group from carbamoyl phosphate (CP) to the N(epsilon) atom of ornithine (ORN) to produce L-citrulline. This Acidothermus cellulolyticus (strain ATCC 43068 / DSM 8971 / 11B) protein is Ornithine carbamoyltransferase.